A 270-amino-acid chain; its full sequence is Checkpoint signal transducer rad24 (270 aa).

Phosphoserine occurs at positions 34 and 66. The disordered stretch occupies residues 242–270 (AAAGGNTEGAQENAPSNAPEGEAEPKADA).

Belongs to the 14-3-3 family. In terms of assembly, homodimer. Binds preferentially to mei2 phosphorylated by ran1/pat1. Binds preferentially to cdc25 phosphorylated by srk1 during G2; the interaction is increased during osmotic stress. Interacts with byr2. Interacts with rad25.

Its subcellular location is the cytoplasm. Acts in cell cycle and stress checkpoint signaling by sequestering signal transducers regulated by the checkpoints. Required for the DNA damage checkpoint that ensures that DNA damage is repaired before mitosis is attempted. During environmental stress, sequesters srk1-phosphorylated cdc25 in the cytoplasm to delay the G2/M transition. Sequesters byr2 in the cytoplasm to prevent its translocation to the plasma membrane. Sequesters ran1/pat1-phosphorylated mei2 from its non-coding RNA activators (including meiRNA), to prevent meiotic induction in vegetative cells and to regulate meiosis I. The chain is Checkpoint signal transducer rad24 from Schizosaccharomyces pombe (strain 972 / ATCC 24843) (Fission yeast).